The sequence spans 208 residues: Large ribosomal subunit protein uL4 (208 aa).

Residues 44-89 form a disordered region; it reads RRQGTHKAKNRSEVRGGGRKPYRQKGTGHARQGSTRSPLMTGGGTI. The span at 60–71 shows a compositional bias: basic residues; the sequence is GGRKPYRQKGTG.

This sequence belongs to the universal ribosomal protein uL4 family. As to quaternary structure, part of the 50S ribosomal subunit.

One of the primary rRNA binding proteins, this protein initially binds near the 5'-end of the 23S rRNA. It is important during the early stages of 50S assembly. It makes multiple contacts with different domains of the 23S rRNA in the assembled 50S subunit and ribosome. In terms of biological role, forms part of the polypeptide exit tunnel. This is Large ribosomal subunit protein uL4 from Chlorobium phaeobacteroides (strain BS1).